The following is a 135-amino-acid chain: uncharacterized protein (135 aa).

This is an uncharacterized protein from Aquifex aeolicus (strain VF5).